A 645-amino-acid chain; its full sequence is Zinc finger protein 64 (645 aa).

3 consecutive C2H2-type zinc fingers follow at residues His-175–His-197, Tyr-203–His-225, and Phe-231–His-253. Residue Glu-286 forms a Glycyl lysine isopeptide (Lys-Gly) (interchain with G-Cter in SUMO2) linkage. The segment at Phe-299–His-324 adopts a C2H2-type 4; atypical zinc-finger fold. C2H2-type zinc fingers lie at residues His-330 to His-352, His-358 to His-380, Tyr-386 to His-408, Phe-414 to His-436, Phe-442 to His-465, Phe-467 to His-489, Glu-495 to His-517, Phe-523 to His-546, and Phe-580 to His-602. Asn-397 participates in a covalent cross-link: Glycyl lysine isopeptide (Lys-Gly) (interchain with G-Cter in SUMO2). 2 stretches are compositionally biased toward basic and acidic residues: residues Asp-543–Asn-554 and Lys-600–Asn-610. Disordered regions lie at residues Asp-543 to Ser-567 and Lys-600 to Leu-645. Residue Val-545 is modified to Phosphoserine. Over residues Ala-622 to Ser-631 the composition is skewed to polar residues.

Belongs to the krueppel C2H2-type zinc-finger protein family. Interacts with ZNF70; this interaction promote the transactivation of the HES1 gene. Interacts with NOTCH1.

It localises to the nucleus. Functionally, may be involved in the regulation of mesenchymal cell differentiation through transactivation of NOTCH1 target genes. This chain is Zinc finger protein 64, found in Homo sapiens (Human).